The primary structure comprises 298 residues: Bifunctional protein FolD (298 aa).

NADP(+)-binding positions include 165-167, Ser-190, and Ile-231; that span reads GRS.

It belongs to the tetrahydrofolate dehydrogenase/cyclohydrolase family. Homodimer.

It carries out the reaction (6R)-5,10-methylene-5,6,7,8-tetrahydrofolate + NADP(+) = (6R)-5,10-methenyltetrahydrofolate + NADPH. The catalysed reaction is (6R)-5,10-methenyltetrahydrofolate + H2O = (6R)-10-formyltetrahydrofolate + H(+). It functions in the pathway one-carbon metabolism; tetrahydrofolate interconversion. Catalyzes the oxidation of 5,10-methylenetetrahydrofolate to 5,10-methenyltetrahydrofolate and then the hydrolysis of 5,10-methenyltetrahydrofolate to 10-formyltetrahydrofolate. This Prochlorococcus marinus (strain MIT 9312) protein is Bifunctional protein FolD.